The sequence spans 331 residues: Glycerol-3-phosphate dehydrogenase [NAD(P)+] (331 aa).

NADPH is bound by residues serine 10, tryptophan 11, arginine 31, arginine 32, and lysine 105. Lysine 105 and glycine 135 together coordinate sn-glycerol 3-phosphate. An NADPH-binding site is contributed by alanine 139. Residues lysine 190, aspartate 243, serine 253, arginine 254, and asparagine 255 each coordinate sn-glycerol 3-phosphate. Lysine 190 (proton acceptor) is an active-site residue. Arginine 254 lines the NADPH pocket. Residues valine 279 and glutamate 281 each contribute to the NADPH site.

This sequence belongs to the NAD-dependent glycerol-3-phosphate dehydrogenase family.

Its subcellular location is the cytoplasm. It catalyses the reaction sn-glycerol 3-phosphate + NAD(+) = dihydroxyacetone phosphate + NADH + H(+). The catalysed reaction is sn-glycerol 3-phosphate + NADP(+) = dihydroxyacetone phosphate + NADPH + H(+). Its pathway is membrane lipid metabolism; glycerophospholipid metabolism. Catalyzes the reduction of the glycolytic intermediate dihydroxyacetone phosphate (DHAP) to sn-glycerol 3-phosphate (G3P), the key precursor for phospholipid synthesis. The sequence is that of Glycerol-3-phosphate dehydrogenase [NAD(P)+] from Corynebacterium diphtheriae (strain ATCC 700971 / NCTC 13129 / Biotype gravis).